A 385-amino-acid chain; its full sequence is UDP-N-acetylglucosamine--N-acetylmuramyl-(pentapeptide) pyrophosphoryl-undecaprenol N-acetylglucosamine transferase (385 aa).

UDP-N-acetyl-alpha-D-glucosamine is bound by residues 24–26 (TAG), N143, R180, S214, and Q310.

The protein belongs to the glycosyltransferase 28 family. MurG subfamily.

The protein localises to the cell membrane. It catalyses the reaction di-trans,octa-cis-undecaprenyl diphospho-N-acetyl-alpha-D-muramoyl-L-alanyl-D-glutamyl-meso-2,6-diaminopimeloyl-D-alanyl-D-alanine + UDP-N-acetyl-alpha-D-glucosamine = di-trans,octa-cis-undecaprenyl diphospho-[N-acetyl-alpha-D-glucosaminyl-(1-&gt;4)]-N-acetyl-alpha-D-muramoyl-L-alanyl-D-glutamyl-meso-2,6-diaminopimeloyl-D-alanyl-D-alanine + UDP + H(+). It participates in cell wall biogenesis; peptidoglycan biosynthesis. In terms of biological role, cell wall formation. Catalyzes the transfer of a GlcNAc subunit on undecaprenyl-pyrophosphoryl-MurNAc-pentapeptide (lipid intermediate I) to form undecaprenyl-pyrophosphoryl-MurNAc-(pentapeptide)GlcNAc (lipid intermediate II). This is UDP-N-acetylglucosamine--N-acetylmuramyl-(pentapeptide) pyrophosphoryl-undecaprenol N-acetylglucosamine transferase from Mycolicibacterium smegmatis (strain ATCC 700084 / mc(2)155) (Mycobacterium smegmatis).